The chain runs to 242 residues: Orotidine 5'-phosphate decarboxylase (242 aa).

Substrate is bound by residues Asp-22, Lys-44, 71–80, Thr-130, Arg-190, Gln-199, Gly-219, and Arg-220; that span reads DLKYHDIPNT. The active-site Proton donor is the Lys-73.

It belongs to the OMP decarboxylase family. Type 1 subfamily. As to quaternary structure, homodimer.

It carries out the reaction orotidine 5'-phosphate + H(+) = UMP + CO2. Its pathway is pyrimidine metabolism; UMP biosynthesis via de novo pathway; UMP from orotate: step 2/2. Its function is as follows. Catalyzes the decarboxylation of orotidine 5'-monophosphate (OMP) to uridine 5'-monophosphate (UMP). In Laribacter hongkongensis (strain HLHK9), this protein is Orotidine 5'-phosphate decarboxylase.